The primary structure comprises 419 residues: G protein-activated inward rectifier potassium channel 4 (419 aa).

The Cytoplasmic segment spans residues 1-86 (MAGDSRNAMN…LFTTLVDLKW (86 aa)). S5 bears the Phosphoserine mark. The helical transmembrane segment at 87–111 (RFNLLVFTMVYTITWLFFGFIWWLI) threads the bilayer. The Extracellular portion of the chain corresponds to 112-135 (AYVRGDLDHVGDQEWIPCVENLSG). The helical; Pore-forming intramembrane region spans 136–147 (FVSAFLFSIETE). Positions 148 to 154 (TTIGYGF) form an intramembrane region, pore-forming. The short motif at 149–154 (TIGYGF) is the Selectivity filter element. Over 155 to 163 (RVITEKCPE) the chain is Extracellular. Residues 164 to 185 (GIILLLVQAILGSIVNAFMVGC) traverse the membrane as a helical segment. Over 186–419 (MFVKISQPKK…SVSRATRGSM (234 aa)) the chain is Cytoplasmic. A compositionally biased stretch (low complexity) spans 380 to 390 (LPSPPLLGGCA). Residues 380-419 (LPSPPLLGGCAEAEKEAEAEHDEEEEPNGLSVSRATRGSM) are disordered. Polar residues predominate over residues 409 to 419 (LSVSRATRGSM).

It belongs to the inward rectifier-type potassium channel (TC 1.A.2.1) family. KCNJ5 subfamily. In terms of assembly, associates with KCNJ3/GIRK1 or KCNJ6/GRIK2 to form a G-protein-activated heteromultimer pore-forming unit. The resulting inward current is much larger. As to expression, most abundant in heart tissue where it is found predominantly in atria. Also found in brain, kidney, liver, spleen, lung and thymus.

It is found in the membrane. It carries out the reaction K(+)(in) = K(+)(out). Its activity is regulated as follows. Heteromultimer composed of KCNJ3/GIRK1 and KCNJ5/GIRK4 is activated by phosphatidylinositol 4,5 biphosphate (PtdIns(4,5)P2). Its function is as follows. Inward rectifier potassium channels are characterized by a greater tendency to allow potassium to flow into the cell rather than out of it. Their voltage dependence is regulated by the concentration of extracellular potassium; as external potassium is raised, the voltage range of the channel opening shifts to more positive voltages. The inward rectification is mainly due to the blockage of outward current by internal magnesium. Can be blocked by external barium. This potassium channel is controlled by G proteins. The chain is G protein-activated inward rectifier potassium channel 4 (Kcnj5) from Rattus norvegicus (Rat).